The following is a 153-amino-acid chain: MNNKTFIDNLKELTEPIVNDLDYELYYLEFVNENKENYLRIYIDSESGIGLEDCEKVSRAVSAMLDEKDPIDTSYYLEVSSPGLERQLYDDKHIEDNIGKTACVRLESLFNGGRKFEGKLKSFDNENLTLEINAEDFKIPRKKIKRINLIYEG.

The protein belongs to the RimP family.

The protein resides in the cytoplasm. Required for maturation of 30S ribosomal subunits. This chain is Ribosome maturation factor RimP, found in Clostridium tetani (strain Massachusetts / E88).